Reading from the N-terminus, the 682-residue chain is Serine/threonine-protein kinase PLK2 (682 aa).

A disordered region spans residues 25–67 (ACGGDSKKKRPQQPSEDGQPQAQVTPAAPHHHHHHSHSGPEIS). Residues 36–48 (QQPSEDGQPQAQV) show a composition bias toward polar residues. The 253-residue stretch at 79 to 331 (YCRGKVLGKG…LDDIIRHDFF (253 aa)) folds into the Protein kinase domain. Residues 85–93 (LGKGGFAKC) and Lys108 each bind ATP. Asp202 acts as the Proton acceptor in catalysis. Residue Thr236 is modified to Phosphothreonine. Residues 403–432 (SITQQPSKHRADEEPQPPPTTVARSGTSAV) form a disordered region. 2 consecutive POLO box domains span residues 500 to 578 (WVTK…YMEE) and 598 to 682 (YLLQ…QRCN).

It belongs to the protein kinase superfamily. Ser/Thr protein kinase family. CDC5/Polo subfamily. As to quaternary structure, interacts with NSF; causing NSF dissociation from GRIA2. Interacts with CIB1. Post-translationally, catalytic activity is enhanced by phosphorylation of Thr-236. As to expression, brain, lung and heart.

Its subcellular location is the cytoplasm. The protein localises to the cytoskeleton. It is found in the microtubule organizing center. It localises to the centrosome. The protein resides in the centriole. Its subcellular location is the cell projection. The protein localises to the dendrite. The enzyme catalyses L-seryl-[protein] + ATP = O-phospho-L-seryl-[protein] + ADP + H(+). It catalyses the reaction L-threonyl-[protein] + ATP = O-phospho-L-threonyl-[protein] + ADP + H(+). Its activity is regulated as follows. Activated by phosphorylation of Thr-236. Once activated, activity is stimulated by binding target proteins. Tumor suppressor serine/threonine-protein kinase involved in synaptic plasticity, centriole duplication and G1/S phase transition. Polo-like kinases act by binding and phosphorylating proteins that are already phosphorylated on a specific motif recognized by the POLO box domains. Phosphorylates CPAP, NPM1, RAPGEF2, RASGRF1, SNCA, SIPA1L1 and SYNGAP1. Plays a key role in synaptic plasticity and memory by regulating the Ras and Rap protein signaling: required for overactivity-dependent spine remodeling by phosphorylating the Ras activator RASGRF1 and the Rap inhibitor SIPA1L1 leading to their degradation by the proteasome. Conversely, phosphorylates the Rap activator RAPGEF2 and the Ras inhibitor SYNGAP1, promoting their activity. Also regulates synaptic plasticity independently of kinase activity, via its interaction with NSF that disrupts the interaction between NSF and the GRIA2 subunit of AMPARs, leading to a rapid rundown of AMPAR-mediated current that occludes long term depression. Required for procentriole formation and centriole duplication by phosphorylating CPAP and NPM1, respectively. Its induction by p53/TP53 suggests that it may participate in the mitotic checkpoint following stress. This chain is Serine/threonine-protein kinase PLK2 (Plk2), found in Mus musculus (Mouse).